The sequence spans 319 residues: Ubiquinone biosynthesis protein COQ9, mitochondrial (319 aa).

The transit peptide at 1 to 45 (MAATVAFSGVLRRAGWRLLQLRCLPVPRCRPALAPRAFRASAMQL) directs the protein to the mitochondrion. Positions 17-32 (RLLQLRCLPVPRCRPA) match the SIFI-degron motif. Residues 46–99 (RSLDQQKDQPPPSSSQQQSEAQGAEEPNPEALRSPPRYTDQGGEEEEDYESEEQ) form a disordered region. A compositionally biased stretch (acidic residues) spans 87 to 98 (GGEEEEDYESEE). N6-acetyllysine is present on Lys-176. Residue Arg-245 coordinates a 1,2-diacylglycero-3-phosphoethanolamine.

It belongs to the COQ9 family. Homodimer. Heterodimer; two heterodimers of COQ7:COQ9 come together on the same side of the lipid pseudo-bilayer and form a curved tetramer with a hydrophobic surface suitable for membrane interaction. These two tetramers assemble into a soluble octamer with a pseudo-bilayer of lipids captured within. Interacts with COQ7; this interaction allows ubiquinone (CoQ) isoprene intermediates presentation to COQ7 and facilitates the COQ7-mediated hydroxylase step. Post-translationally, in response to mitochondrial stress, the precursor protein is ubiquitinated by the SIFI complex in the cytoplasm before mitochondrial import, leading to its degradation. Within the SIFI complex, UBR4 initiates ubiquitin chain that are further elongated or branched by KCMF1.

Its subcellular location is the mitochondrion. The protein operates within cofactor biosynthesis; ubiquinone biosynthesis. Its function is as follows. Membrane-associated protein that warps the membrane surface to access and bind aromatic isoprenes with high specificity, including ubiquinone (CoQ) isoprene intermediates and presents them directly to COQ7, therefore facilitating the COQ7-mediated hydroxylase step. Participates in the biosynthesis of coenzyme Q, also named ubiquinone, an essential lipid-soluble electron transporter for aerobic cellular respiration. This is Ubiquinone biosynthesis protein COQ9, mitochondrial from Bos taurus (Bovine).